The primary structure comprises 212 residues: Probable GTP-binding protein EngB (212 aa).

An EngB-type G domain is found at 27-201 (GGIEIAFAGR…TRILSDWYQP (175 aa)). Residues 35–42 (GRSNAGKS), 62–66 (GRTQL), 80–83 (DLPG), 147–150 (TKAD), and 180–182 (FSS) each bind GTP. Residues S42 and T64 each coordinate Mg(2+).

It belongs to the TRAFAC class TrmE-Era-EngA-EngB-Septin-like GTPase superfamily. EngB GTPase family. Mg(2+) is required as a cofactor.

In terms of biological role, necessary for normal cell division and for the maintenance of normal septation. In Tolumonas auensis (strain DSM 9187 / NBRC 110442 / TA 4), this protein is Probable GTP-binding protein EngB.